Consider the following 264-residue polypeptide: Proliferating cell nuclear antigen 2 (264 aa).

The DNA-binding element occupies 61–80; it reads RCDRNLSMGMNLGNMSKMLK.

The protein belongs to the PCNA family. Homo- and heterotrimer. Interacts with POLH, ATXR5 and ATXR6.

Its subcellular location is the nucleus. Functionally, this protein is an auxiliary protein of DNA polymerase delta and is involved in the control of eukaryotic DNA replication by increasing the polymerase's processibility during elongation of the leading strand. May be involved in UV resistance. This is Proliferating cell nuclear antigen 2 (PCNA2) from Arabidopsis thaliana (Mouse-ear cress).